The chain runs to 623 residues: Zinc finger protein 143 (623 aa).

7 C2H2-type zinc fingers span residues 230 to 254 (FRCE…ERSH), 260 to 284 (YICD…VRTH), 290 to 314 (YRCQ…TRTH), 320 to 344 (FKCP…IRTH), 350 to 374 (YYCA…MRIH), 380 to 404 (YVCT…HVVH), and 410 to 433 (YNCN…RTAH).

The protein belongs to the GLI C2H2-type zinc-finger protein family.

It is found in the nucleus. Its function is as follows. Transcriptional activator. Activates the gene for selenocysteine tRNA (tRNAsec). Binds to the activator element (AE) motif of the selenocysteine tRNA gene promoter. In Danio rerio (Zebrafish), this protein is Zinc finger protein 143 (znf143).